Consider the following 564-residue polypeptide: MSDNRRSRMITEGPQRSPNRAMLRAVGFGDNDFTKPIVGVANGHSTLTPCNAGLGALAARAEAAIRAAGGMPQIFGTITVSDGISMGTEGMKYSLVSREVIADSIETVVNAQRMDGILAVGGCDKNMPGALIAMARLDIPAIFVYGGTIKPGHYKGRDLTIVSVFEAVGEYSAGRIDEHELLEIERHACPGVGSCGGMYTANTMSSAIEALGLSLPGSSTMAAEDEEKAISAARSGEVLVEAIRANRTARQMLTRKSFENAIAVVMALGGSTNAVLHLLAIAYAANVPLTIDDFETIRQRVPVLCDLKPSGRYVATDLHRVGGVPQVMKMLLNAGLLHGDCMTITGQTIAEVLADVPDEPPADQDVIRPFHKPLYPQGHLAILRGNLAEEGCVAKITGIKQRSITGPARVFDAEEECLEAILSGKIKPGDVVVIRYEGPKGGPGMREMLAPTSAIIGAGLGDSVGLITDGRFSGGTYGLVVGHVAPEAAVGGTIALVEEGDSITIDADARLLQLNVSDEELARRRAAWQPRPPRYTRGVLAKYARLVSSASLGAVTDRFDGESA.

Cys50 is a binding site for [2Fe-2S] cluster. Asp82 provides a ligand contact to Mg(2+). Cys123 provides a ligand contact to [2Fe-2S] cluster. The Mg(2+) site is built by Asp124 and Lys125. Lys125 bears the N6-carboxylysine mark. Residue Cys195 coordinates [2Fe-2S] cluster. Glu447 contributes to the Mg(2+) binding site. The active-site Proton acceptor is Ser473.

It belongs to the IlvD/Edd family. Homodimer. Requires [2Fe-2S] cluster as cofactor. Mg(2+) serves as cofactor.

It carries out the reaction (2R)-2,3-dihydroxy-3-methylbutanoate = 3-methyl-2-oxobutanoate + H2O. The catalysed reaction is (2R,3R)-2,3-dihydroxy-3-methylpentanoate = (S)-3-methyl-2-oxopentanoate + H2O. The protein operates within amino-acid biosynthesis; L-isoleucine biosynthesis; L-isoleucine from 2-oxobutanoate: step 3/4. Its pathway is amino-acid biosynthesis; L-valine biosynthesis; L-valine from pyruvate: step 3/4. In terms of biological role, functions in the biosynthesis of branched-chain amino acids. Catalyzes the dehydration of (2R,3R)-2,3-dihydroxy-3-methylpentanoate (2,3-dihydroxy-3-methylvalerate) into 2-oxo-3-methylpentanoate (2-oxo-3-methylvalerate) and of (2R)-2,3-dihydroxy-3-methylbutanoate (2,3-dihydroxyisovalerate) into 2-oxo-3-methylbutanoate (2-oxoisovalerate), the penultimate precursor to L-isoleucine and L-valine, respectively. The polypeptide is Dihydroxy-acid dehydratase (Chloroflexus aggregans (strain MD-66 / DSM 9485)).